Consider the following 779-residue polypeptide: MINPDNNDLYDLNEALKVENLTINDYEEICKRLKRKPNRTELGMFGVMWSEHCCYRNSKPLLSNFPTKGKNILVGPGENAGVIDVGNNQKLVFKIESHNHPSAIEPFQGAATGVGGILRDIFTMGARPIAVLNSLRFGNLDKTSNMDLLRGVVSGIAHYGNCVGVPTVGGEIDFDDSYSGNPLVNVMALGLLETNEIVCSGAKNVGSPVLYVGNTTGRDGVGGASFASSELTITSLDDRPAVQVGDPFIEKSLIEACLDAFKTGDVIAAQDMGAAGLTCSSAEMAANGNLGISIDLDLVPSREDNMSSYQYLLSESQERMLFVVKEEKINNLIEKFNKWGLYANVIGEVIETNEVIISHKRKIVAQIPTSALSDDTPVNLHNVMKNPPNYLLKKWKWNENNLPEINEQKIFSLKENKSFSYSEIILKLLANPSIASKRWIYKQYDSQVQANTVFKPGESDAAVIRLREQNEKNKSKVFSGVAASVDCNSRWVSLDPFRGTIAAVAESARNVSCVGAEPVAITNNLNFSSPETEIGYWQLSSSCNAISEACKALETPVTGGNVSLYNESKNRDNEITPINPTPVIGMVGKIDNVEKAISTEWKNINDQIWLIGSHKSETTIAASSYLEYFHGEITGRPPKIDLQDEKFCQSFLRNAILNNFVVSSHDISDGGLAIALAECCILSAKGATIELEKDLNRDDNVLFSEGGSRIIFSIDKMKEKEWSNYLKKIQINSQSNVYVKKIGYVSSEILKIKIQDKNICDISVEELTEKFNNSISGYF.

The active site involves His-52. Residues Tyr-55 and Lys-94 each contribute to the ATP site. Glu-96 serves as a coordination point for Mg(2+). Residues 97 to 100 (SHNH) and Arg-119 contribute to the substrate site. The active-site Proton acceptor is the His-98. Asp-120 serves as a coordination point for Mg(2+). Position 243 (Gln-243) interacts with substrate. Residue Asp-271 coordinates Mg(2+). 315-317 (ESQ) serves as a coordination point for substrate. ATP-binding residues include Asn-523 and Gly-560. Asn-561 contributes to the Mg(2+) binding site. Ser-563 contacts substrate.

It belongs to the FGAMS family. In terms of assembly, monomer. Part of the FGAM synthase complex composed of 1 PurL, 1 PurQ and 2 PurS subunits.

The protein localises to the cytoplasm. It carries out the reaction N(2)-formyl-N(1)-(5-phospho-beta-D-ribosyl)glycinamide + L-glutamine + ATP + H2O = 2-formamido-N(1)-(5-O-phospho-beta-D-ribosyl)acetamidine + L-glutamate + ADP + phosphate + H(+). It functions in the pathway purine metabolism; IMP biosynthesis via de novo pathway; 5-amino-1-(5-phospho-D-ribosyl)imidazole from N(2)-formyl-N(1)-(5-phospho-D-ribosyl)glycinamide: step 1/2. Part of the phosphoribosylformylglycinamidine synthase complex involved in the purines biosynthetic pathway. Catalyzes the ATP-dependent conversion of formylglycinamide ribonucleotide (FGAR) and glutamine to yield formylglycinamidine ribonucleotide (FGAM) and glutamate. The FGAM synthase complex is composed of three subunits. PurQ produces an ammonia molecule by converting glutamine to glutamate. PurL transfers the ammonia molecule to FGAR to form FGAM in an ATP-dependent manner. PurS interacts with PurQ and PurL and is thought to assist in the transfer of the ammonia molecule from PurQ to PurL. This chain is Phosphoribosylformylglycinamidine synthase subunit PurL, found in Prochlorococcus marinus (strain MIT 9312).